Reading from the N-terminus, the 453-residue chain is MEGVDIPGRPSPWRVCVTRPQVHPINAKVAPMPGATSHVPLLSVVIPTYNRDALLDRTLGTLARQTTAPEDFEVVVSDDGSTDTTRDVVRSYEDRLRIKYVFQEDLGYRVASARNGGARLASAPLLAFLDTGVLAGPQYVQSVLAAHAGPAPAKVVLGCCYGYDPRNPHPELHSLVEEFPPEEAVRRVGDAPWFQDMRLPEFTAVDFDLSRMHMPWLWFWTLNVSLPAADFWRVGGFDEDFTGWGGEDIELGYRLHAHGIPMTVSRESWGIEAPHERTHEANVSSLMLNCDRFVRKHPSLLPELFWAVTNRGIFGSVETERLRFEEWASQARGQQVLDEIAIGLDTLPPSQHTQRVAVFGSGTEGLPTAPRQNVELFLCDYDEGVLARQESRDDGAVSTWHLSGLRTPWPDQHFDLVIITSRMDGPRQAWGEAFTKEAHRIASSVVEPSLSGD.

This sequence belongs to the glycosyltransferase 2 family. Requires Mn(2+) as cofactor.

The catalysed reaction is validoxylamine A + UDP-alpha-D-glucose = validamycin A + UDP + H(+). Functionally, involved in the biosynthesis of the antifungal agent validamycin A. Catalyzes the final attachment of glucose from UDP-alpha-D-glucose to validoxylamine A to yield validamycin A. This is Validoxylamine A glucosyltransferase from Streptomyces hygroscopicus subsp. limoneus.